The following is a 244-amino-acid chain: MLKPSLNAAAKWMIRNTIVSNESLTPEINLHLITIASPLWMSTPDACPLPDPYWAFYWPGGQGLSRFILDNKPLFQGSEIVDFGAGCGSASISASICGAKKILANDIDRYALLSTKLNFHLNNLRDSKIQYSSINFLDDKNERMSTQFFTDSKNIRKFILLGDMFYDSDFAELLFSWLKKIQDAHMVRVLVGDPDRHPLAESEYLQRYKTKFTKNQLAEFSLPGYVIKEHYGFNTAKVFELKFQ.

The protein belongs to the methyltransferase superfamily. ETFBKMT family.

Its function is as follows. Probable methyltransferase. The polypeptide is Electron transfer flavoprotein beta subunit lysine methyltransferase homolog (Caenorhabditis elegans).